We begin with the raw amino-acid sequence, 227 residues long: Cytochrome c oxidase subunit 2 (227 aa).

The Mitochondrial intermembrane portion of the chain corresponds to 1–14 (MAHPMQLGFQDAAS). Residues 15-45 (PIMEELLYFHDHTLMIVFMISSLVLYIISLM) traverse the membrane as a helical segment. Topologically, residues 46-59 (LSTELTHTSTMDAQ) are mitochondrial matrix. The chain crosses the membrane as a helical span at residues 60–87 (EVETVWTILPAVILILIALPSLRILYMM). The Mitochondrial intermembrane segment spans residues 88 to 227 (DEINTPSMTL…YFEEWLLKSL (140 aa)). Residues His161, Cys196, Glu198, Cys200, His204, and Met207 each contribute to the Cu cation site. Residue Glu198 participates in Mg(2+) binding. Position 218 is a phosphotyrosine (Tyr218).

It belongs to the cytochrome c oxidase subunit 2 family. In terms of assembly, component of the cytochrome c oxidase (complex IV, CIV), a multisubunit enzyme composed of 14 subunits. The complex is composed of a catalytic core of 3 subunits MT-CO1, MT-CO2 and MT-CO3, encoded in the mitochondrial DNA, and 11 supernumerary subunits COX4I, COX5A, COX5B, COX6A, COX6B, COX6C, COX7A, COX7B, COX7C, COX8 and NDUFA4, which are encoded in the nuclear genome. The complex exists as a monomer or a dimer and forms supercomplexes (SCs) in the inner mitochondrial membrane with NADH-ubiquinone oxidoreductase (complex I, CI) and ubiquinol-cytochrome c oxidoreductase (cytochrome b-c1 complex, complex III, CIII), resulting in different assemblies (supercomplex SCI(1)III(2)IV(1) and megacomplex MCI(2)III(2)IV(2)). Found in a complex with TMEM177, COA6, COX18, COX20, SCO1 and SCO2. Interacts with TMEM177 in a COX20-dependent manner. Interacts with COX20. Interacts with COX16. The cofactor is Cu cation.

It localises to the mitochondrion inner membrane. It carries out the reaction 4 Fe(II)-[cytochrome c] + O2 + 8 H(+)(in) = 4 Fe(III)-[cytochrome c] + 2 H2O + 4 H(+)(out). Functionally, component of the cytochrome c oxidase, the last enzyme in the mitochondrial electron transport chain which drives oxidative phosphorylation. The respiratory chain contains 3 multisubunit complexes succinate dehydrogenase (complex II, CII), ubiquinol-cytochrome c oxidoreductase (cytochrome b-c1 complex, complex III, CIII) and cytochrome c oxidase (complex IV, CIV), that cooperate to transfer electrons derived from NADH and succinate to molecular oxygen, creating an electrochemical gradient over the inner membrane that drives transmembrane transport and the ATP synthase. Cytochrome c oxidase is the component of the respiratory chain that catalyzes the reduction of oxygen to water. Electrons originating from reduced cytochrome c in the intermembrane space (IMS) are transferred via the dinuclear copper A center (CU(A)) of subunit 2 and heme A of subunit 1 to the active site in subunit 1, a binuclear center (BNC) formed by heme A3 and copper B (CU(B)). The BNC reduces molecular oxygen to 2 water molecules using 4 electrons from cytochrome c in the IMS and 4 protons from the mitochondrial matrix. This is Cytochrome c oxidase subunit 2 (MT-CO2) from Nycticebus coucang (Slow loris).